The chain runs to 430 residues: Enolase (430 aa).

Gln-167 contributes to the (2R)-2-phosphoglycerate binding site. Glu-209 (proton donor) is an active-site residue. Mg(2+) contacts are provided by Asp-245, Glu-286, and Asp-313. Lys-338, Arg-367, Ser-368, and Lys-389 together coordinate (2R)-2-phosphoglycerate. The active-site Proton acceptor is the Lys-338.

This sequence belongs to the enolase family. The cofactor is Mg(2+).

It is found in the cytoplasm. It localises to the secreted. The protein localises to the cell surface. It carries out the reaction (2R)-2-phosphoglycerate = phosphoenolpyruvate + H2O. It functions in the pathway carbohydrate degradation; glycolysis; pyruvate from D-glyceraldehyde 3-phosphate: step 4/5. Functionally, catalyzes the reversible conversion of 2-phosphoglycerate (2-PG) into phosphoenolpyruvate (PEP). It is essential for the degradation of carbohydrates via glycolysis. The protein is Enolase of Synechococcus sp. (strain CC9902).